The following is a 974-amino-acid chain: Ephrin type-B receptor 3 (974 aa).

An N-terminal signal peptide occupies residues 1-16; the sequence is MLPAVFVILALSAVQG. The Extracellular portion of the chain corresponds to 17–534; it reads LEETLMDTKW…RSSLQEQVPM (518 aa). Positions 18–196 constitute an Eph LBD domain; sequence EETLMDTKWT…FFKKCPRTTA (179 aa). The cysteines at positions 60 and 178 are disulfide-linked. Fibronectin type-III domains lie at 318-426 and 427-522; these read VPSA…TNQA and APSS…IAED. Residues asparagine 330 and asparagine 420 are each glycosylated (N-linked (GlcNAc...) asparagine). Residues 535–555 form a helical membrane-spanning segment; it reads VVGSVTAGLIFIIAVVIIVIV. Over 556–974 the chain is Cytoplasmic; that stretch reads CFSRKQRNDS…QMSQTLPVQV (419 aa). Position 590 is a phosphotyrosine; by autocatalysis (tyrosine 590). A Protein kinase domain is found at 609–872; that stretch reads VKIEEVIGAG…QIVSSLDKLI (264 aa). Residues 615–623 and lysine 641 contribute to the ATP site; that span reads IGAGEFGEV. Aspartate 734 serves as the catalytic Proton acceptor. Positions 901 to 965 constitute an SAM domain; sequence TTFPTVSDWL…LNSVQDMRLQ (65 aa). Residues 972–974 carry the PDZ-binding motif; that stretch reads VQV.

The protein belongs to the protein kinase superfamily. Tyr protein kinase family. Ephrin receptor subfamily. As to quaternary structure, heterotetramer upon binding of the ligand. The heterotetramer is composed of an ephrin dimer and a receptor dimer. Oligomerization is probably required to induce biological responses. Post-translationally, phosphorylated. Autophosphorylates upon ligand-binding. Autophosphorylation on Tyr-590 is required for interaction with SH2 domain-containing proteins. As to expression, expressed in the embryo in pre-somitic mesoderm, caudal somites, midbrain, and cement gland. Most abundant in adult brain, eye, heart, lung and ovary. Lower levels in intestine, kidney, oviduct and pharynx.

It localises to the cell membrane. The protein resides in the cell projection. It is found in the dendrite. The enzyme catalyses L-tyrosyl-[protein] + ATP = O-phospho-L-tyrosyl-[protein] + ADP + H(+). Functionally, receptor tyrosine kinase which binds promiscuously transmembrane ephrin-B family ligands residing on adjacent cells, leading to contact-dependent bidirectional signaling into neighboring cells. The signaling pathway downstream of the receptor is referred to as forward signaling while the signaling pathway downstream of the ephrin ligand is referred to as reverse signaling. Generally has an overlapping and redundant function with EPHB2. Like EPHB2, functions in axon guidance during development. In addition to its role in axon guidance also plays an important redundant role with other ephrin-B receptors in development and maturation of dendritic spines and the formation of excitatory synapses. May control other aspects of development through regulation of cell migration and positioning. This chain is Ephrin type-B receptor 3 (ephb3), found in Xenopus laevis (African clawed frog).